We begin with the raw amino-acid sequence, 393 residues long: Formate-dependent phosphoribosylglycinamide formyltransferase (393 aa).

Residues 22 to 23 (EL) and glutamate 82 each bind N(1)-(5-phospho-beta-D-ribosyl)glycinamide. Residues arginine 114, lysine 155, 160 to 165 (SSGKGQ), 195 to 198 (EGLV), and glutamate 203 each bind ATP. In terms of domain architecture, ATP-grasp spans 119–308 (RLAAETLQLP…EFALHVRAFL (190 aa)). Residues glutamate 267 and glutamate 279 each contribute to the Mg(2+) site. N(1)-(5-phospho-beta-D-ribosyl)glycinamide-binding positions include aspartate 286, lysine 355, and 362–363 (RR).

Belongs to the PurK/PurT family. In terms of assembly, homodimer.

It catalyses the reaction N(1)-(5-phospho-beta-D-ribosyl)glycinamide + formate + ATP = N(2)-formyl-N(1)-(5-phospho-beta-D-ribosyl)glycinamide + ADP + phosphate + H(+). It participates in purine metabolism; IMP biosynthesis via de novo pathway; N(2)-formyl-N(1)-(5-phospho-D-ribosyl)glycinamide from N(1)-(5-phospho-D-ribosyl)glycinamide (formate route): step 1/1. Involved in the de novo purine biosynthesis. Catalyzes the transfer of formate to 5-phospho-ribosyl-glycinamide (GAR), producing 5-phospho-ribosyl-N-formylglycinamide (FGAR). Formate is provided by PurU via hydrolysis of 10-formyl-tetrahydrofolate. This Yersinia pseudotuberculosis serotype O:3 (strain YPIII) protein is Formate-dependent phosphoribosylglycinamide formyltransferase.